The sequence spans 240 residues: Methylthioribulose-1-phosphate dehydratase (240 aa).

Position 99 (cysteine 99) interacts with substrate. 2 residues coordinate Zn(2+): histidine 116 and histidine 118. Catalysis depends on glutamate 145, which acts as the Proton donor/acceptor. Histidine 201 lines the Zn(2+) pocket.

Belongs to the aldolase class II family. MtnB subfamily. The cofactor is Zn(2+).

Its subcellular location is the cytoplasm. The catalysed reaction is 5-(methylsulfanyl)-D-ribulose 1-phosphate = 5-methylsulfanyl-2,3-dioxopentyl phosphate + H2O. It participates in amino-acid biosynthesis; L-methionine biosynthesis via salvage pathway; L-methionine from S-methyl-5-thio-alpha-D-ribose 1-phosphate: step 2/6. Catalyzes the dehydration of methylthioribulose-1-phosphate (MTRu-1-P) into 2,3-diketo-5-methylthiopentyl-1-phosphate (DK-MTP-1-P). This Ajellomyces capsulatus (strain G186AR / H82 / ATCC MYA-2454 / RMSCC 2432) (Darling's disease fungus) protein is Methylthioribulose-1-phosphate dehydratase.